A 523-amino-acid polypeptide reads, in one-letter code: Signal peptide peptidase-like 3 (523 aa).

The N-terminal stretch at 1–35 (MAFPAPSSSSPRRRGRGLAYLLVSVLLLASRVPGA) is a signal peptide. Over 36 to 207 (AGADSEFEDG…EKPSFDGAIP (172 aa)) the chain is Lumenal. Positions 110–182 (SAPLASSIAV…SQSAGRKILS (73 aa)) constitute a PA domain. N-linked (GlcNAc...) asparagine glycosylation occurs at asparagine 159. Residues 208 to 228 (FLWLMAVGSVACASVWSFVVV) form a helical membrane-spanning segment. Residues 229-254 (GDEDKNAPTLGGEEAADSEIVELQTK) lie on the Cytoplasmic side of the membrane. A helical membrane pass occupies residues 255–272 (TALVFIVTASLVLLFLFF). The Lumenal segment spans residues 273–275 (FKS). A helical membrane pass occupies residues 276–298 (TWSAWLLVVLFCLSGLQGLHYVA). At 299 to 321 (STLIVRTCDRCREAKVALPVLGN) the chain is on the cytoplasmic side. Residues 322 to 342 (VTVVTLVILPLALIFVVVWAV) form a helical membrane-spanning segment. Over 343 to 347 (HQNSP) the chain is Lumenal. A helical transmembrane segment spans residues 348–368 (FAWVGQDLMGICMMILVLQVV). The Cytoplasmic segment spans residues 369 to 377 (HLPNIKVAT). Residues 378–398 (ALLVSAFMYDIFWVFISPFIF) form a helical membrane-spanning segment. Residue aspartate 387 is part of the active site. Residues 399–430 (KKSVMITVARGSDEGPSLPMVLKMPKEFDTWN) are Lumenal-facing. The chain crosses the membrane as a helical span at residues 431-451 (GYDMIGFGDILFPGLLVAFSF). The active site involves aspartate 439. The Cytoplasmic segment spans residues 452–465 (RYDRANGKDLTDGY). The chain crosses the membrane as a helical span at residues 466–486 (FLCLMIGYAFGLSCTYVGLYL). The Lumenal portion of the chain corresponds to 487 to 489 (MKS). Residues 490–510 (GQPALLYLVPSTLGTIVTLGA) form a helical membrane-spanning segment. Residues 492–494 (PAL) carry the PAL motif. At 511–523 (KRGELSQLWNAKV) the chain is on the cytoplasmic side.

The protein belongs to the peptidase A22B family. Glycosylated.

It localises to the endosome membrane. Its function is as follows. Intramembrane-cleaving aspartic protease (I-CLiP) that cleaves type II membrane signal peptides in the hydrophobic plane of the membrane. The sequence is that of Signal peptide peptidase-like 3 (SPPL3) from Oryza sativa subsp. japonica (Rice).